The primary structure comprises 485 residues: MPVLKKRKLAHTAQPDPIVSDLESSSSEASQQSHDEQLTAANEQDDESPQVQREEAVTKSFKDLGIIDSLCEACEALGYKSPTPIQAESIPLALQGRDLIGLAETGSGKTAAFALPILQALMNKPQSLFGLILAPTRELACQISEAFEALGSLISVRCAVIVGGMDMVSQAISLGKKPHIIVATPGRLLDHLENTKGFSLRSLKYLVMDEADRLLDLDFGPILDKILKVLPRERRTYLFSATMSSKVESLQRASLSNPLRVSISSNKYQTVATLLQSYLFIPHKYKDIYLVYLLNEYAGQSAIVFTRTVNETQRLAILLRALGFGSIPLHGQLSQSSRLGALSKFRSRSRDILVATDVAARGLDIPSVDVVLNFDLPSDSKTYIHRVGRTARAGKSGHAFSIVTQYDIEVWLRIENALGKKLDEYKVEKEEVMVLSDRVGEAQRHAITEMKDLHEKRGSRGATLKGRRPAKGAKRGRDEMDREEG.

Residues 1 to 10 (MPVLKKRKLA) show a composition bias toward basic residues. The segment at 1–55 (MPVLKKRKLAHTAQPDPIVSDLESSSSEASQQSHDEQLTAANEQDDESPQVQREE) is disordered. The span at 20–32 (SDLESSSSEASQQ) shows a compositional bias: low complexity. Residues 59–87 (KSFKDLGIIDSLCEACEALGYKSPTPIQA) carry the Q motif motif. Residues 90-261 (IPLALQGRDL…RASLSNPLRV (172 aa)) form the Helicase ATP-binding domain. Residue 103–110 (AETGSGKT) participates in ATP binding. The short motif at 209-212 (DEAD) is the DEAD box element. The Helicase C-terminal domain maps to 285–433 (YKDIYLVYLL…EYKVEKEEVM (149 aa)). Residues 449-458 (EMKDLHEKRG) are compositionally biased toward basic and acidic residues. The segment at 449 to 485 (EMKDLHEKRGSRGATLKGRRPAKGAKRGRDEMDREEG) is disordered. Basic residues predominate over residues 465-474 (KGRRPAKGAK). Residues 475-485 (RGRDEMDREEG) show a composition bias toward basic and acidic residues.

Belongs to the DEAD box helicase family. DDX47/RRP3 subfamily. In terms of assembly, interacts with the SSU processome.

It is found in the nucleus. The enzyme catalyses ATP + H2O = ADP + phosphate + H(+). Its function is as follows. ATP-dependent rRNA helicase required for pre-ribosomal RNA processing. Involved in the maturation of the 35S-pre-rRNA and to its cleavage to mature 18S rRNA. In Ajellomyces capsulatus (strain NAm1 / WU24) (Darling's disease fungus), this protein is ATP-dependent rRNA helicase RRP3.